Consider the following 329-residue polypeptide: uncharacterized protein (329 aa).

The 144-residue stretch at 37–180 (LAEKILGHSG…AMLLFHSRGV (144 aa)) folds into the SIS domain. 52-57 (GVGKSG) contributes to the ATP binding site. CBS domains follow at residues 206 to 265 (MFPK…GGEV) and 274 to 329 (MTAN…AGLL).

The protein belongs to the SIS family. GutQ/KpsF subfamily.

This is an uncharacterized protein from Chlamydia pneumoniae (Chlamydophila pneumoniae).